A 320-amino-acid chain; its full sequence is RNA polymerase sigma factor SigA2 (320 aa).

The interval 89–159 (MIEANLRLVV…TRAIAQQSRT (71 aa)) is sigma-70 factor domain-2. Positions 113–116 (DLIQ) match the Interaction with polymerase core subunit RpoC motif. The segment at 168 to 243 (EKLNKLKKTQ…EDEQSSPSDY (76 aa)) is sigma-70 factor domain-3. A sigma-70 factor domain-4 region spans residues 256 to 310 (LMAELTPQQQAVIALRYGLDEGDSLSLAKVGERLNISRERVRKLERQAMDHLRRR). A DNA-binding region (H-T-H motif) is located at residues 282–301 (LAKVGERLNISRERVRKLER).

The protein belongs to the sigma-70 factor family.

It localises to the cytoplasm. Sigma factors are initiation factors that promote the attachment of RNA polymerase to specific initiation sites and are then released. This sigma factor is a component of the biological clock pathway that affects the circadian expression of a subset of genes in this bacterium. In Synechococcus elongatus (strain ATCC 33912 / PCC 7942 / FACHB-805) (Anacystis nidulans R2), this protein is RNA polymerase sigma factor SigA2 (sigA2).